The primary structure comprises 383 residues: Guanine nucleotide-binding protein alpha-1 subunit (383 aa).

Positions Met1 to Gln20 are disordered. Residue Gly2 is the site of N-myristoyl glycine attachment. Cys5 carries S-palmitoyl cysteine lipidation. The region spanning His37–Leu383 is the G-alpha domain. The segment at Lys40 to Thr53 is G1 motif. The GTP site is built by Glu48, Ser49, Gly50, Lys51, Ser52, Thr53, Asp162, Leu187, Tyr188, Thr193, Gly221, Asn287, Lys288, Asp290, and Ala355. Ser52 contributes to the Mg(2+) binding site. The interval Asp185 to Thr193 is G2 motif. Residue Thr193 participates in Mg(2+) binding. Positions Tyr214 to Arg223 are G3 motif. The interval Met283–Asp290 is G4 motif. Residues Thr353 to Gln358 form a G5 motif region.

The protein belongs to the G-alpha family. In terms of assembly, g proteins are composed of 3 units; alpha, beta and gamma. The alpha chain contains the guanine nucleotide binding site. Interacts with RGS1, THF1, the pirin protein PRN1, GTG1 and GTG2. Binds to GCR1. May interact with ADT3. No interactions with RACK1A, RACK1B or RACK1C. Interacts with PLDALPHA1. Interacts with CAND2/PMTR1. Mg(2+) serves as cofactor. More abundant in roots and/or leaves.

It localises to the cell membrane. In terms of biological role, exhibits a fast rate of basal nucleotide exchange. Guanine nucleotide-binding proteins (G proteins) are involved as modulators or transducers in various transmembrane signaling systems. Together with GCR1, may regulate the cell cycle via a signaling cascade that uses phosphatidylinositol-specific phospholipase C (PI-PLC) as an effector and inositol 1,4,5-trisphosphate (IP(3)) as a second messenger. Promotes abscisic acid (ABA) responses in guard cells. Involved in the blue light (BL) signaling. Together with GCR1 and ADT3, required for BL-mediated synthesis of phenylpyruvate and subsequently of phenylalanine (Phe), in etiolated seedlings. Modulates root architecture (e.g. lateral root formation). Negatively regulated by RGS1. In collaboration with CAND2/PMTR1, regulates the melatonin-mediated stomatal closure involving H(2)O(2) and Ca(2+) signals. The chain is Guanine nucleotide-binding protein alpha-1 subunit from Arabidopsis thaliana (Mouse-ear cress).